The sequence spans 916 residues: Oxysterol-binding protein 2 (916 aa).

Disordered regions lie at residues 1–20, 34–121, and 139–163; these read MGKA…SRGL, TAAP…PFTK, and PESG…TPLG. Residues 49 to 58 show a composition bias toward pro residues; it reads EPKPQPQPVP. Residues 79–92 are compositionally biased toward low complexity; it reads RSEPVSETTSEPEP. The segment covering 99–113 has biased composition (polar residues); the sequence is ELLQGSRPGSESSSG. A compositionally biased stretch (low complexity) spans 144-155; it reads LPALKPLPLLRP. The PH domain occupies 182–274; sequence LDSFEGWLLK…WITALELAKA (93 aa). Disordered regions lie at residues 282 to 301 and 417 to 448; these read THSD…DKSE and FHSA…EEDE. Position 287 is a phosphoserine (S287). Phosphoserine is present on S763. Residues 813–842 form a disordered region; sequence EGVAPTDSRLRPDQRLMEKGRWDEANTEKQ.

Belongs to the OSBP family. Interacts with CCDC159. In terms of tissue distribution, expressed mainly in retina, testis, and fetal liver.

It localises to the membrane. The protein resides in the cytoplasmic vesicle. Its subcellular location is the secretory vesicle. It is found in the acrosome. Binds 7-ketocholesterol. Acts during spermatid development where its function is required prior to the removal of cytoplasm from the sperm head. This chain is Oxysterol-binding protein 2 (OSBP2), found in Homo sapiens (Human).